A 538-amino-acid chain; its full sequence is ATP-dependent rRNA helicase RRP3 (538 aa).

A compositionally biased stretch (basic residues) spans 1–11 (MSSAKRVKLSH). The disordered stretch occupies residues 1 to 112 (MSSAKRVKLS…SKEETPTKSF (112 aa)). Residues 34–47 (KKITQAPKAAAPIK) show a composition bias toward low complexity. Residues 53–85 (AEEDDDDDDKDDKDEEDEEQNDDSSDEASENDD) show a composition bias toward acidic residues. A compositionally biased stretch (basic and acidic residues) spans 92–112 (EATKEGQTELPSKEETPTKSF). The Q motif signature appears at 110–138 (KSFRDLGIVEPLCEACEALKFKKPTPIQE). One can recognise a Helicase ATP-binding domain in the interval 141–312 (IPLALQGRDV…RASLRDPLKV (172 aa)). 154 to 161 (AETGSGKT) lines the ATP pocket. The short motif at 260–263 (DEAD) is the DEAD box element. Positions 336–486 (HKDVYLIYLA…LFQPDKEEVM (151 aa)) constitute a Helicase C-terminal domain. Residues 498–512 (HAREEMKALHEDRGK) are compositionally biased toward basic and acidic residues. The disordered stretch occupies residues 498-538 (HAREEMKALHEDRGKKGAVLKGRKRGSATKRRHDDMDAEEG). A compositionally biased stretch (basic residues) spans 513-528 (KGAVLKGRKRGSATKR).

Belongs to the DEAD box helicase family. DDX47/RRP3 subfamily. As to quaternary structure, interacts with the SSU processome.

Its subcellular location is the nucleus. It catalyses the reaction ATP + H2O = ADP + phosphate + H(+). In terms of biological role, ATP-dependent rRNA helicase required for pre-ribosomal RNA processing. Involved in the maturation of the 35S-pre-rRNA and to its cleavage to mature 18S rRNA. This chain is ATP-dependent rRNA helicase RRP3, found in Pyricularia oryzae (strain 70-15 / ATCC MYA-4617 / FGSC 8958) (Rice blast fungus).